A 396-amino-acid polypeptide reads, in one-letter code: Elongation factor Tu (396 aa).

The 196-residue stretch at Lys10–Val205 folds into the tr-type G domain. The segment at Gly19–Thr26 is G1. GTP is bound at residue Gly19–Thr26. Thr26 is a binding site for Mg(2+). Positions Gly62–Asn66 are G2. Residues Asp83–Gly86 form a G3 region. GTP is bound by residues Asp83–His87 and Asn138–Asp141. A G4 region spans residues Asn138–Asp141. A G5 region spans residues Ser175 to Leu177.

It belongs to the TRAFAC class translation factor GTPase superfamily. Classic translation factor GTPase family. EF-Tu/EF-1A subfamily. Monomer.

The protein localises to the cytoplasm. The catalysed reaction is GTP + H2O = GDP + phosphate + H(+). Functionally, GTP hydrolase that promotes the GTP-dependent binding of aminoacyl-tRNA to the A-site of ribosomes during protein biosynthesis. This Corynebacterium glutamicum (strain R) protein is Elongation factor Tu.